Here is a 462-residue protein sequence, read N- to C-terminus: Bindin (462 aa).

Positions 1-19 are cleaved as a signal peptide; it reads MARQLSVILVALTLTTALA. The propeptide occupies 20–244; that stretch reads ENFPTRTSAP…DSGRSARKKR (225 aa). 2 disordered regions span residues 155–194 and 221–278; these read DDRR…APKD and RTRR…QGMG. The segment at 372-380 is fucose-binding domain; the sequence is LRHLRHHSN.

It belongs to the bindin family.

It is found in the cytoplasmic vesicle. The protein localises to the secretory vesicle. Its subcellular location is the acrosome lumen. Functionally, species-specific sea urchin sperm protein required for adhesion of sperm to the egg surface during fertilization. Bindin coats the acrosomal process after it is externalized by the acrosome reaction. It binds to sulfated, fucose-containing polysaccharides on the vitelline layer receptor proteoglycans which cover the egg plasma membrane. The polypeptide is Bindin (Lytechinus variegatus (Green sea urchin)).